The sequence spans 611 residues: Probable cysteine desulfurase 1 (611 aa).

The segment at 1-208 (MRATQLYAAS…HEMVDVFDIQ (208 aa)) is cargo-loading domain. K428 bears the N6-(pyridoxal phosphate)lysine mark. C566 (cysteine persulfide intermediate) is an active-site residue.

It belongs to the class-V pyridoxal-phosphate-dependent aminotransferase family. Csd subfamily. In terms of assembly, there are 1-2 copies of this protein in each type 2A encapsulin shell. Requires pyridoxal 5'-phosphate as cofactor.

It is found in the encapsulin nanocompartment. The enzyme catalyses (sulfur carrier)-H + L-cysteine = (sulfur carrier)-SH + L-alanine. Cargo protein of a type 2A encapsulin nanocompartment involved in sulfur metabolism. Cysteine desulfurases mobilize the sulfur from L-cysteine to yield L-alanine, an essential step in sulfur metabolism for biosynthesis of a variety of sulfur-containing biomolecules. In Mycobacterium leprae (strain TN), this protein is Probable cysteine desulfurase 1.